Consider the following 178-residue polypeptide: Large ribosomal subunit protein bL35m (178 aa).

It belongs to the bacterial ribosomal protein bL35 family.

It localises to the mitochondrion. This Drosophila melanogaster (Fruit fly) protein is Large ribosomal subunit protein bL35m (mRpL35).